Here is a 227-residue protein sequence, read N- to C-terminus: Cytidylate kinase (227 aa).

12–20 serves as a coordination point for ATP; that stretch reads GPSGAGKGT.

Belongs to the cytidylate kinase family. Type 1 subfamily.

It is found in the cytoplasm. The enzyme catalyses CMP + ATP = CDP + ADP. It carries out the reaction dCMP + ATP = dCDP + ADP. This chain is Cytidylate kinase, found in Xanthomonas oryzae pv. oryzae (strain PXO99A).